The chain runs to 70 residues: GEECDCGSPSNPCCDAATCKLRPGAQCADGLCCDQCRFKKKRTICRIARGDFPDDRCTGQSADCPRWNGL.

Residues 1 to 70 (GEECDCGSPS…SADCPRWNGL (70 aa)) enclose the Disintegrin domain. 6 disulfides stabilise this stretch: cysteine 4/cysteine 19, cysteine 6/cysteine 14, cysteine 13/cysteine 36, cysteine 27/cysteine 33, cysteine 32/cysteine 57, and cysteine 45/cysteine 64. The Cell attachment site motif lies at 49–51 (RGD).

Belongs to the venom metalloproteinase (M12B) family. P-II subfamily. P-IIa sub-subfamily. As to quaternary structure, monomer. As to expression, expressed by the venom gland.

It is found in the secreted. Its function is as follows. Inhibits fibrinogen interaction with platelets. Acts by binding to alpha-IIb/beta-3 (ITGA2B/ITGB3) on the platelet surface and inhibits aggregation induced by ADP, thrombin, platelet-activating factor and collagen. This Protobothrops flavoviridis (Habu) protein is Disintegrin triflavin.